We begin with the raw amino-acid sequence, 234 residues long: Eukaryotic translation initiation factor 3 subunit K (234 aa).

Residues Ser46–Ser219 enclose the PCI domain.

This sequence belongs to the eIF-3 subunit K family. In terms of assembly, component of the eukaryotic translation initiation factor 3 (eIF-3) complex.

It localises to the cytoplasm. Component of the eukaryotic translation initiation factor 3 (eIF-3) complex, which is involved in protein synthesis of a specialized repertoire of mRNAs and, together with other initiation factors, stimulates binding of mRNA and methionyl-tRNAi to the 40S ribosome. The eIF-3 complex specifically targets and initiates translation of a subset of mRNAs involved in cell proliferation. This is Eukaryotic translation initiation factor 3 subunit K from Yarrowia lipolytica (strain CLIB 122 / E 150) (Yeast).